The sequence spans 886 residues: DNA mismatch repair protein MutS (886 aa).

Residue 641–648 (GPNMAGKS) participates in ATP binding.

This sequence belongs to the DNA mismatch repair MutS family.

In terms of biological role, this protein is involved in the repair of mismatches in DNA. It is possible that it carries out the mismatch recognition step. This protein has a weak ATPase activity. The chain is DNA mismatch repair protein MutS from Rickettsia felis (strain ATCC VR-1525 / URRWXCal2) (Rickettsia azadi).